The primary structure comprises 387 residues: Acetylserotonin O-methyltransferase (387 aa).

Residues Tyr-153, Trp-170, Glu-216, 246-248, and Arg-263 each bind S-adenosyl-L-methionine; that span reads GDF. His-266 functions as the Proton donor/acceptor in the catalytic mechanism. Residues Asp-267 and Gln-317 each coordinate substrate. Residues 355 to 387 are disordered; that stretch reads ARGGGAGARSDGGGGEATSQTGSGTGREVGAQD. Over residues 356-370 the composition is skewed to gly residues; sequence RGGGAGARSDGGGGE.

This sequence belongs to the class I-like SAM-binding methyltransferase superfamily. Cation-independent O-methyltransferase family. Homodimer.

The enzyme catalyses N-acetylserotonin + S-adenosyl-L-methionine = melatonin + S-adenosyl-L-homocysteine + H(+). It participates in aromatic compound metabolism; melatonin biosynthesis; melatonin from serotonin: step 1/2. In terms of biological role, catalyzes the transfer of a methyl group onto N-acetylserotonin, producing melatonin (N-acetyl-5-methoxytryptamine). This Mus musculus molossinus (Japanese house mouse) protein is Acetylserotonin O-methyltransferase (Asmt).